The primary structure comprises 132 residues: MSTASAAAVVKQKVEAPVHPMDARIDELTDYIMKNCLWQFHSRSWDRERQNAEILKKTKELLCGEPVDLSTSHDRCYWVDAVCLADDYREHYPWINSMSKEEIGSLMQGLKDRMDYLTITGSLNEELSDKHY.

As to quaternary structure, hexamer of two alpha, two beta, and two delta chains. Iron-sulfur cluster is required as a cofactor.

It carries out the reaction N2 + 8 reduced [2Fe-2S]-[ferredoxin] + 16 ATP + 16 H2O = H2 + 8 oxidized [2Fe-2S]-[ferredoxin] + 2 NH4(+) + 16 ADP + 16 phosphate + 6 H(+). The key enzymatic reactions in nitrogen fixation are catalyzed by the nitrogenase complex, which has 2 components: the iron protein (component 2) and a component 1 which is either a molybdenum-iron protein, a vanadium-iron, or an iron-iron protein. The chain is Nitrogenase iron-iron protein delta chain (anfG) from Azotobacter vinelandii.